Here is a 637-residue protein sequence, read N- to C-terminus: Neurexin-3-beta (637 aa).

A signal peptide spans 1–35 (MHLRIHARRSPPRRPAWTLGIWFLFWGCIVSSVWS). At 36-562 (SSNVASSSST…EVIRESSSTT (527 aa)) the chain is on the extracellular side. Residues 43–52 (SSTSSSPGSH) are compositionally biased toward low complexity. The segment at 43–65 (SSTSSSPGSHSQHEHHFHGSKHH) is disordered. Over residues 55 to 65 (HEHHFHGSKHH) the composition is skewed to basic residues. The 171-residue stretch at 85 to 255 (ATYIFGKSGG…NPNIKINGSV (171 aa)) folds into the Laminin G-like domain. Ca(2+) contacts are provided by D137 and I154. The N-linked (GlcNAc...) asparagine glycan is linked to N184. Residues I206 and N208 each contribute to the Ca(2+) site. 2 N-linked (GlcNAc...) asparagine glycosylation sites follow: N252 and N296. The segment at 289–310 (ATTTTRKNRSTASIQPTSDDLV) is disordered. Residues 298–310 (STASIQPTSDDLV) are compositionally biased toward polar residues. S312 carries an O-linked (Xyl...) (heparan sulfate) serine glycan. Residues 563-583 (GMVVGIVAAAALCILILLYAM) form a helical membrane-spanning segment. Topologically, residues 584 to 637 (YKYRNRDEGSYQVDETRNYISNSAQSNGTLMKEKQQSSKSGHKKQKNKDREYYV) are cytoplasmic. Residues 605-637 (NSAQSNGTLMKEKQQSSKSGHKKQKNKDREYYV) are disordered.

This sequence belongs to the neurexin family. In terms of assembly, weakly interacts with CBLN1 and CBLN2. Very weak binding, if any, to CBLN4. Specific isoforms bind neuroligins NLGN1, NLGN2 and NLGN3. Interacts with CLSTN3. In terms of processing, processed by alpha-secretase leading to the formation of an extracellular soluble protein as well as a C-terminal membrane-embedded fragment (CTF). Proteolysis of these CTFs by gamma-secretase releases intracellular domains (ICDs) and extracellular peptides. Post-translationally, O-glycosylated; contains heparan sulfate. Heparan sulfate attachment is required for synapse development by mediating interactions with neuroligins. As to expression, expressed in the blood vessel walls (at protein level).

It localises to the presynaptic cell membrane. Functionally, neuronal cell surface protein that may be involved in cell recognition and cell adhesion. May mediate intracellular signaling. Functions as part of a trans-synaptic complex by binding to cerebellins and postsynaptic GRID1. This interaction helps regulate the activity of NMDA and AMPA receptors at hippocampal synapses without affecting synapse formation. NRXN3B-CBLN2-GRID1 complex transduce presynaptic signals into postsynaptic AMPAR response. The chain is Neurexin-3-beta from Homo sapiens (Human).